The chain runs to 34 residues: Photosystem II reaction center protein Psb30 (34 aa).

A helical transmembrane segment spans residues 7-27; sequence VAQLISLFLILTSGPAIIVLI.

It belongs to the Psb30/Ycf12 family. In terms of assembly, PSII is composed of 1 copy each of membrane proteins PsbA, PsbB, PsbC, PsbD, PsbE, PsbF, PsbH, PsbI, PsbJ, PsbK, PsbL, PsbM, PsbT, PsbX, PsbY, PsbZ, Psb30/Ycf12, peripheral proteins of the oxygen-evolving complex and a large number of cofactors. It forms dimeric complexes.

The protein localises to the plastid. It is found in the chloroplast thylakoid membrane. Functionally, a core subunit of photosystem II (PSII), probably helps stabilize the reaction center. This is Photosystem II reaction center protein Psb30 from Rhodomonas salina (Cryptomonas salina).